The chain runs to 1405 residues: Centlein (1405 aa).

The span at 1-14 (MAARSPPSPHPSPP) shows a compositional bias: pro residues. The disordered stretch occupies residues 1–79 (MAARSPPSPH…GGAAPAHAPL (79 aa)). At Ala-2 the chain carries N-acetylalanine. Phosphoserine is present on residues Ser-5 and Ser-22. The segment covering 48–58 (VVADESDKIWV) has biased composition (basic and acidic residues). A compositionally biased stretch (gly residues) spans 61-71 (EGSGGRRGPGG). Residues 95 to 126 (EEAMVTRTQLLEEELSSLKEELALCQADKEFV) adopt a coiled-coil conformation. Disordered stretches follow at residues 421 to 450 (KLKE…QVPH) and 493 to 529 (SRKS…EELQ). 2 coiled-coil regions span residues 613 to 655 (NELA…ELNR) and 681 to 793 (KNGK…ELIN). Positions 865–917 (WEDVSESSSDSEAQTSQTLGTIIVETSQKISPTEDGKDQKESDPTEDSQTQGK) are disordered. The span at 877–895 (AQTSQTLGTIIVETSQKIS) shows a compositional bias: polar residues. The segment covering 896–907 (PTEDGKDQKESD) has biased composition (basic and acidic residues). The stretch at 980–1311 (NIILLRERII…IRELKKMKKN (332 aa)) forms a coiled coil. Residue Thr-1343 is modified to Phosphothreonine.

Interacts with CEP250 and CEP68. Interacts with NEK2; the interaction leads to phosphorylation of CNTLN. In terms of processing, phosphorylated directly or indirectly by NEK2.

Its subcellular location is the cytoplasm. The protein resides in the cytoskeleton. The protein localises to the microtubule organizing center. It localises to the centrosome. It is found in the centriole. Its function is as follows. Required for centrosome cohesion and recruitment of CEP68 to centrosomes. This chain is Centlein (CNTLN), found in Homo sapiens (Human).